We begin with the raw amino-acid sequence, 155 residues long: 6,7-dimethyl-8-ribityllumazine synthase (155 aa).

Residues phenylalanine 23, 57 to 59 (AFE), and 81 to 83 (AVI) each bind 5-amino-6-(D-ribitylamino)uracil. 86 to 87 (AT) is a binding site for (2S)-2-hydroxy-3-oxobutyl phosphate. The active-site Proton donor is histidine 89. Position 114 (phenylalanine 114) interacts with 5-amino-6-(D-ribitylamino)uracil. Arginine 128 serves as a coordination point for (2S)-2-hydroxy-3-oxobutyl phosphate.

It belongs to the DMRL synthase family.

It carries out the reaction (2S)-2-hydroxy-3-oxobutyl phosphate + 5-amino-6-(D-ribitylamino)uracil = 6,7-dimethyl-8-(1-D-ribityl)lumazine + phosphate + 2 H2O + H(+). The protein operates within cofactor biosynthesis; riboflavin biosynthesis; riboflavin from 2-hydroxy-3-oxobutyl phosphate and 5-amino-6-(D-ribitylamino)uracil: step 1/2. Functionally, catalyzes the formation of 6,7-dimethyl-8-ribityllumazine by condensation of 5-amino-6-(D-ribitylamino)uracil with 3,4-dihydroxy-2-butanone 4-phosphate. This is the penultimate step in the biosynthesis of riboflavin. The polypeptide is 6,7-dimethyl-8-ribityllumazine synthase (Geotalea uraniireducens (strain Rf4) (Geobacter uraniireducens)).